The following is a 94-amino-acid chain: MSRSVKKGAYVHVRLLKKIERLNQKGEKQIIKTWARSSTIVPAMVGHTLAVYNGKTHIPVFITDALVGHKLGEFAPTRNFRSHVKGDRKIRKSI.

This sequence belongs to the universal ribosomal protein uS19 family.

The protein localises to the plastid. It localises to the chloroplast. Its function is as follows. Protein S19 forms a complex with S13 that binds strongly to the 16S ribosomal RNA. The polypeptide is Small ribosomal subunit protein uS19c (Cyanidioschyzon merolae (strain NIES-3377 / 10D) (Unicellular red alga)).